The chain runs to 235 residues: MTSLARLKFYATQPHACSYLPDEQATTLFLDPSQPMDVQVYAELSEMGFRRSGDHLYRPHCQRCSACIPARIPVNAPELSRQQKRILKRNADLQVRGVRPAFSEELYALYANYIEKRHADGDMYPPSREQFNTFLVRDLPFSRFYEFRLDGRLLAVAVTDVLPNGLSAVYTFYDPDEERRSLGRYAILWQMGEAARLGLKAVYLGYWIKNCRKMNYKTEYRPIELLVNQRWVTLS.

It belongs to the R-transferase family. Bpt subfamily.

The protein localises to the cytoplasm. It catalyses the reaction N-terminal L-glutamyl-[protein] + L-leucyl-tRNA(Leu) = N-terminal L-leucyl-L-glutamyl-[protein] + tRNA(Leu) + H(+). The catalysed reaction is N-terminal L-aspartyl-[protein] + L-leucyl-tRNA(Leu) = N-terminal L-leucyl-L-aspartyl-[protein] + tRNA(Leu) + H(+). In terms of biological role, functions in the N-end rule pathway of protein degradation where it conjugates Leu from its aminoacyl-tRNA to the N-termini of proteins containing an N-terminal aspartate or glutamate. The protein is Aspartate/glutamate leucyltransferase of Stutzerimonas stutzeri (strain A1501) (Pseudomonas stutzeri).